A 472-amino-acid chain; its full sequence is 3beta,22alpha-dihydroxysteroid 3-dehydrogenase (472 aa).

The chain crosses the membrane as a helical span at residues 1 to 21 (MAFTAFLLLLSSIAAGFLLLL). C418 contacts heme.

The protein belongs to the cytochrome P450 family. Heme serves as cofactor.

It is found in the membrane. The enzyme catalyses (22S)-22-hydroxycampesterol + reduced [NADPH--hemoprotein reductase] + O2 = (22S)-22-hydroxycampest-4-en-3-one + oxidized [NADPH--hemoprotein reductase] + 2 H2O + H(+). The catalysed reaction is 6-deoxoteasterone + reduced [NADPH--hemoprotein reductase] + O2 = 3-dehydro-6-deoxoteasterone + oxidized [NADPH--hemoprotein reductase] + 2 H2O + H(+). It carries out the reaction 6-deoxycathasterone + reduced [NADPH--hemoprotein reductase] + O2 = (22S,24R)-22-hydroxy-5alpha-ergostan-3-one + oxidized [NADPH--hemoprotein reductase] + 2 H2O + H(+). It catalyses the reaction (22R,23R)-22,23-dihydroxycampesterol + reduced [NADPH--hemoprotein reductase] + O2 = (22R,23R)-22,23-dihydroxycampest-4-en-3-one + oxidized [NADPH--hemoprotein reductase] + 2 H2O + H(+). The protein operates within plant hormone biosynthesis; brassinosteroid biosynthesis. Catalyzes C3-oxidation steps in brassinosteroids biosynthesis. Converts (22S)-22-hydroxycampesterol (22-OHCR) to (22S,24R)-22-hydroxyergost-4-en-3-one (22-hydroxy-campesta-4-en-3-one, 22-OH-4-en-3-one), 6-deoxocathasterone (6-deoxoCT) to (22S,24R)-22-hydroxy-5alpha-ergostan-3-one (22-hydroxy-campesta-3-one, 22-OH-3-one), (22R,23R)-22,23-dihydroxycampesterol (22,23-diOHCR) to (22R,23R)-22,23-dihydroxy-campest-4-en-3-one (22,23-diOH-4-en-3-one), and 6-deoxoteasterone (6-deoxoTE) to 3-dehydro-6-deoxoteasterone (6-deoxo3DT, 6-deoxo-3-DHT). This is 3beta,22alpha-dihydroxysteroid 3-dehydrogenase from Arabidopsis thaliana (Mouse-ear cress).